Here is a 220-residue protein sequence, read N- to C-terminus: Probable septum site-determining protein MinC (220 aa).

The protein belongs to the MinC family. As to quaternary structure, interacts with MinD and FtsZ.

Cell division inhibitor that blocks the formation of polar Z ring septums. Rapidly oscillates between the poles of the cell to destabilize FtsZ filaments that have formed before they mature into polar Z rings. Prevents FtsZ polymerization. The chain is Probable septum site-determining protein MinC from Vibrio atlanticus (strain LGP32) (Vibrio splendidus (strain Mel32)).